The chain runs to 4545 residues: Prolow-density lipoprotein receptor-related protein 1 (4545 aa).

The N-terminal stretch at 1–19 (MLTPPLLLLLPLLSALVAG) is a signal peptide. Topologically, residues 20-4424 (ATMDAPKTCS…SQQQPGHMTS (4405 aa)) are extracellular. 2 LDL-receptor class A domains span residues 27–66 (TCSPKQFACRDQITCISKGWRCDGERDCPDGSDEAPEICP) and 72–110 (RCPPNEHSCLGTELCVPMSRLCNGIQDCMDGSDEGAHCR). 6 disulfide bridges follow: cysteine 28–cysteine 41, cysteine 35–cysteine 54, cysteine 48–cysteine 65, cysteine 73–cysteine 86, cysteine 80–cysteine 99, and cysteine 93–cysteine 109. Asparagine 115, asparagine 137, asparagine 186, asparagine 240, and asparagine 275 each carry an N-linked (GlcNAc...) asparagine glycan. LDL-receptor class B repeat units lie at residues 293–335 (GNFY…DPAM), 336–379 (GKVF…DLVS), and 380–423 (RLVY…FENY). Asparagine 358 is a glycosylation site (N-linked (GlcNAc...) asparagine). N-linked (GlcNAc...) asparagine glycosylation is present at asparagine 447. LDL-receptor class B repeat units lie at residues 572–614 (GFIY…DWMG), 615–660 (DNLY…DPLN), 661–711 (GWMY…DIPA), and 712–755 (GRLY…HGNY). Residues 639–671 (TRKTLIEGKMTHPRAIVVDPLNGWMYWTDWEED) form an HAT 1 repeat. Residue asparagine 730 is glycosylated (N-linked (GlcNAc...) asparagine). 8 consecutive LDL-receptor class A domains span residues 854–892 (QCQPGEFACANNRCIQERWKCDGDNDCLDNSDEAPALCH), 895–933 (TCPSDRFKCENNRCIPNRWLCDGDNDCGNSEDESNATCS), 936–973 (TCPPNQFSCASGRCIPISWTCDLDDDCGDRSDESASCA), 976–1013 (TCFPLTQFTCNNGRCININWRCDNDNDCGDNSDEAGCS), 1015–1053 (SCSSTQFKCNSGRCIPEHWTCDGDNDCGDYSDETHANCT), 1062–1099 (GCHSDEFQCRLDGLCIPLRWRCDGDTDCMDSSDEKGCE), 1104–1142 (VCDPNVKFGCKDSARCISKAWVCDGDSDCEDNSDEENCE), and 1145–1184 (ACRPPSHPCANNTSVCLSPDKLCDGKDDCGDGSDEGELCD). Disulfide bonds link cysteine 855–cysteine 867, cysteine 862–cysteine 880, cysteine 874–cysteine 891, cysteine 896–cysteine 908, cysteine 903–cysteine 921, cysteine 915–cysteine 932, cysteine 937–cysteine 949, cysteine 944–cysteine 962, cysteine 956–cysteine 972, cysteine 977–cysteine 990, cysteine 985–cysteine 1003, cysteine 997–cysteine 1012, cysteine 1016–cysteine 1028, cysteine 1023–cysteine 1041, cysteine 1035–cysteine 1052, cysteine 1063–cysteine 1076, cysteine 1070–cysteine 1089, cysteine 1083–cysteine 1098, cysteine 1105–cysteine 1119, cysteine 1113–cysteine 1132, cysteine 1126–cysteine 1141, cysteine 1146–cysteine 1160, cysteine 1153–cysteine 1173, and cysteine 1167–cysteine 1183. Residues tryptophan 872, aspartate 875, aspartate 877, aspartate 879, aspartate 885, and glutamate 886 each contribute to the Ca(2+) site. N-linked (GlcNAc...) asparagine glycosylation is present at asparagine 929. 6 residues coordinate Ca(2+): tryptophan 1033, aspartate 1036, aspartate 1038, aspartate 1040, aspartate 1046, and glutamate 1047. The N-linked (GlcNAc...) asparagine glycan is linked to asparagine 1051. The Ca(2+) site is built by tryptophan 1081, aspartate 1084, aspartate 1086, aspartate 1088, aspartate 1094, and glutamate 1095. Residue asparagine 1156 is glycosylated (N-linked (GlcNAc...) asparagine). N-linked (GlcNAc...) asparagine glycans are attached at residues asparagine 1196 and asparagine 1219. LDL-receptor class B repeat units follow at residues 1310-1356 (SALY…DWIA), 1357-1399 (GNIY…DPRD), 1400-1446 (GILF…DYLE), 1447-1491 (KRIL…YGGE), and 1492-1532 (VYWT…YHPS). HAT repeat units lie at residues 1380 to 1413 (TTLLAGDIEHPRAIALDPRDGILFWTDWDASLPR) and 1470 to 1503 (MEVLRGHEFLSHPFAVTLYGGEVYWTDWRTNTLA). Asparagine 1512, asparagine 1559, asparagine 1576, asparagine 1617, and asparagine 1646 each carry an N-linked (GlcNAc...) asparagine glycan. LDL-receptor class B repeat units follow at residues 1628–1670 (QRVY…DWVS), 1671–1714 (RNLF…HPLR), 1715–1754 (GKLYWTDGDNISMVNMDGSNRTLLFSGQKGPVGLAIDFPE), and 1755–1799 (SKLY…MGDK). An HAT 4 repeat occupies 1653-1684 (VVSADLPNAHGLAVDWVSRNLFWTSYDTNKKQ). Residues asparagine 1724, asparagine 1734, asparagine 1764, asparagine 1826, and asparagine 1934 are each glycosylated (N-linked (GlcNAc...) asparagine). LDL-receptor class B repeat units follow at residues 1935-1977 (DTIY…DWIA), 1978-2020 (GNIY…HPEK), 2021-2064 (GYLF…DYQG), and 2065-2108 (GKLY…FEDF). The N-linked (GlcNAc...) asparagine glycan is linked to asparagine 1996. Lysine 2010 bears the N6-acetyllysine mark. An N-linked (GlcNAc...) asparagine glycan is attached at asparagine 2049. Asparagine 2118 and asparagine 2128 each carry an N-linked (GlcNAc...) asparagine glycan. 5 LDL-receptor class B repeats span residues 2254 to 2295 (NRIF…HRGW), 2296 to 2344 (DTLY…DECQ), 2345 to 2389 (NLMF…DHRA), 2390 to 2432 (EKLY…YGEH), and 2433 to 2474 (IFWT…VAND). 3 HAT repeats span residues 2277–2309 (TTIVENVGSVEGLAYHRGWDTLYWTSYTTSTIT), 2325–2358 (TVITMSGDDHPRAFVLDECQNLMFWTNWNELHPS), and 2411–2444 (HRYVILKSEPVHPFGLAVYGEHIFWTDWVRRAVQ). 3 N-linked (GlcNAc...) asparagine glycosylation sites follow: asparagine 2473, asparagine 2503, and asparagine 2522. 7 consecutive LDL-receptor class A domains span residues 2524-2563 (SCRAQDEFECANGECISFSLTCDGVSHCKDKSDEKPSYCN), 2566-2602 (RCKKTFRQCNNGRCVSNMLWCNGVDDCGDGSDEIPCN), 2605-2641 (ACGVGEFRCRDGSCIGNSSRCNQFVDCEDASDEMNCS), 2639-2690 (NCSA…RDCP), 2696-2732 (RCPLNYFACPSGRCIPMSWTCDKEDDCENGEDETHCN), 2734-2771 (FCSEAQFECQNHRCISKQWLCDGSDDCGDGSDEAAHCE), and 2774-2814 (TCGP…AGCL). Intrachain disulfides connect cysteine 2525/cysteine 2538, cysteine 2533/cysteine 2551, cysteine 2545/cysteine 2562, cysteine 2567/cysteine 2579, cysteine 2574/cysteine 2592, and cysteine 2586/cysteine 2601. An N-linked (GlcNAc...) asparagine glycan is attached at asparagine 2602. Intrachain disulfides connect cysteine 2606-cysteine 2618, cysteine 2613-cysteine 2631, cysteine 2625-cysteine 2640, cysteine 2640-cysteine 2667, cysteine 2645-cysteine 2680, cysteine 2674-cysteine 2689, cysteine 2697-cysteine 2709, cysteine 2704-cysteine 2722, cysteine 2716-cysteine 2731, cysteine 2735-cysteine 2747, cysteine 2742-cysteine 2760, cysteine 2754-cysteine 2770, cysteine 2775-cysteine 2788, cysteine 2782-cysteine 2801, and cysteine 2795-cysteine 2813. N-linked (GlcNAc...) asparagine glycans are attached at residues asparagine 2621 and asparagine 2639. A glycan (N-linked (GlcNAc...) asparagine) is linked at asparagine 2816. LDL-receptor class A domains follow at residues 2818 to 2855 (TCDDREFMCQNRLCIPKHFVCDHDRDCADGSDESPECE), 2858 to 2899 (TCGP…PHCT), and 2904 to 2941 (KCNASSQFLCSSGRCVAEALLCNGQDDCGDGSDERGCH). Cystine bridges form between cysteine 2819-cysteine 2831, cysteine 2826-cysteine 2844, cysteine 2838-cysteine 2854, cysteine 2859-cysteine 2871, cysteine 2866-cysteine 2885, cysteine 2879-cysteine 2898, cysteine 2905-cysteine 2918, cysteine 2913-cysteine 2931, cysteine 2925-cysteine 2940, cysteine 2987-cysteine 2997, and cysteine 2993-cysteine 3006. N-linked (GlcNAc...) asparagine glycosylation occurs at asparagine 2906. Residues 2983–3018 (DVDECSTTFPCSQLCINTHGSYKCLCVEGYAPRGGD) enclose the EGF-like 1; calcium-binding domain. N-linked (GlcNAc...) asparagine glycosylation is found at asparagine 3049 and asparagine 3090. LDL-receptor class B repeat units follow at residues 3070–3114 (QMIY…DWVG), 3115–3157 (GNLY…DVQN), 3158–3201 (GYLY…DYVT), 3202–3244 (ERIY…FEDY), and 3245–3285 (VYWT…FHAL). HAT repeat units lie at residues 3128–3171 (EVSK…HSLI) and 3224–3256 (RHVVLSQDIPHIFALTLFEDYVYWTDWETKSIN). Residues asparagine 3265 and asparagine 3334 are each glycosylated (N-linked (GlcNAc...) asparagine). LDL-receptor class A domains lie at 3334 to 3371 (NCTASQFVCKNDKCIPFWWKCDTEDDCGDHSDEPPDCP), 3374 to 3410 (KCRPGQFQCSTGICTNPAFICDGDNDCQDNSDEANCD), 3413 to 3450 (VCLPSQFKCTNTNRCIPGIFRCNGQDNCGDGEDERDCP), 3453 to 3491 (TCAPNQFQCSITKRCIPRVWVCDRDNDCVDGSDEPANCT), 3494 to 3533 (TCGVDEFRCKDSGRCIPARWKCDGEDDCGDGSDEPKEECD), 3536 to 3572 (TCEPYQFRCKNNRCVPGRWQCDYDNDCGDNSDEESCT), 3575 to 3611 (PCSESEFSCANGRCIAGRWKCDGDHDCADGSDEKDCT), 3613 to 3649 (RCDMDQFQCKSGHCIPLRWRCDADADCMDGSDEEACG), 3654 to 3692 (TCPLDEFQCNNTLCKPLAWKCDGEDDCGDNSDENPEECT), 3695 to 3733 (QCPPNRPFRCKNDRVCLWIGRQCDGTDNCGDGTDEEDCE), and 3741 to 3778 (HCKDKKEFLCRNQRCLSSSLRCNMFDDCGDGSDEEDCS). Cystine bridges form between cysteine 3335–cysteine 3347, cysteine 3342–cysteine 3360, cysteine 3354–cysteine 3370, cysteine 3375–cysteine 3387, cysteine 3382–cysteine 3400, cysteine 3394–cysteine 3409, cysteine 3414–cysteine 3427, cysteine 3421–cysteine 3440, cysteine 3434–cysteine 3449, cysteine 3454–cysteine 3467, cysteine 3461–cysteine 3480, cysteine 3474–cysteine 3490, cysteine 3495–cysteine 3508, cysteine 3502–cysteine 3521, cysteine 3515–cysteine 3532, cysteine 3537–cysteine 3549, cysteine 3544–cysteine 3562, cysteine 3556–cysteine 3571, cysteine 3576–cysteine 3588, cysteine 3583–cysteine 3601, cysteine 3595–cysteine 3610, cysteine 3614–cysteine 3626, cysteine 3621–cysteine 3639, cysteine 3633–cysteine 3648, cysteine 3655–cysteine 3667, cysteine 3662–cysteine 3680, cysteine 3674–cysteine 3691, cysteine 3696–cysteine 3710, cysteine 3704–cysteine 3723, cysteine 3717–cysteine 3732, cysteine 3742–cysteine 3755, cysteine 3750–cysteine 3768, and cysteine 3762–cysteine 3777. Asparagine 3489 is a glycosylation site (N-linked (GlcNAc...) asparagine). Asparagine 3663 carries an N-linked (GlcNAc...) asparagine glycan. N-linked (GlcNAc...) asparagine glycans are attached at residues asparagine 3789 and asparagine 3840. An LDL-receptor class B 31 repeat occupies 3913–3925 (GRVYWTNWHTGTI). Asparagine 3954 carries N-linked (GlcNAc...) asparagine glycosylation. LDL-receptor class B repeat units follow at residues 3971–4013 (GNVY…DPLR), 4014–4057 (GTMY…DYHN), and 4058–4102 (ERLY…FEDY). An HAT 10 repeat occupies 3995–4027 (TLISGMIDEPHAIVVDPLRGTMYWSDWGNHPKI). 3 N-linked (GlcNAc...) asparagine glycosylation sites follow: asparagine 4076, asparagine 4126, and asparagine 4180. EGF-like domains follow at residues 4197–4230 (RPGTCTLQCFNGGSCFLNARRQPKCRCQPRYTGD), 4233–4269 (ELDQCWEYCHNGGTCAASPSGMPTCRCPTGFTGPRCT), 4270–4302 (QQVCAGYCANNSTCTVNQGNQPQCRCLPGFLGD), and 4305–4341 (QYRQCSGFCENFGTCQMAADGSRQCRCTVYFEGTRCE). Cystine bridges form between cysteine 4201–cysteine 4211, cysteine 4205–cysteine 4221, cysteine 4237–cysteine 4247, cysteine 4241–cysteine 4257, cysteine 4259–cysteine 4268, cysteine 4273–cysteine 4283, cysteine 4277–cysteine 4293, cysteine 4309–cysteine 4319, cysteine 4313–cysteine 4329, and cysteine 4331–cysteine 4340. Residue asparagine 4280 is glycosylated (N-linked (GlcNAc...) asparagine). N-linked (GlcNAc...) asparagine glycosylation occurs at asparagine 4365. The EGF-like 6 domain maps to 4376-4410 (LTCIDHCSNGGSCTMNSKMMPECQCPPHMTGPRCE). Cystine bridges form between cysteine 4378/cysteine 4388, cysteine 4382/cysteine 4398, and cysteine 4400/cysteine 4409. A helical membrane pass occupies residues 4425 to 4445 (ILIPLLLLLLLLLVAGVVFWY). Over 4446–4545 (KRRVRGAKGF…PEDEIGDPLA (100 aa)) the chain is Cytoplasmic. The interval 4446–4545 (KRRVRGAKGF…PEDEIGDPLA (100 aa)) is interaction with MAFB. Threonine 4461 bears the Phosphothreonine mark. Tyrosine 4508 is subject to Phosphotyrosine. Residues serine 4518, serine 4521, and serine 4524 each carry the phosphoserine modification.

Belongs to the LDLR family. In terms of assembly, heterodimer of an 85-kDa membrane-bound carboxyl subunit and a non-covalently attached 515-kDa N-terminal subunit. Intracellular domain interacts with MAFB. Found in a complex with PID1/PCLI1, LRP1 and CUBNI. Interacts with SNX17, PID1/PCLI1, PDGF and CUBN. The intracellular domain interacts with SHC1, GULP1 and DAB1. Can weakly interact (via NPXY motif) with DAB2 (via PID domain); the interaction is enhanced by tyrosine phosphorylation of the NPXY motif. Interacts with MDK; promotes neuronal survival. Interacts with LRPAP1; this interaction is followed by rapid internalization. Interacts with uPA/PLAU and PAI1/SERPINE1, either individually or in complex with each other, leading to rapid endocytosis; this interaction is abolished in the presence of LRPAP1/RAP. Also interacts with tPA/PLAT alone or in complex with SERPINE1. Interacts with the urokinase receptor PLAUR; this interaction leads to PLAUR internalization and is impaired in the presence of SORL1. Interacts with PDGFB. Interacts with TAU/MAPT, leading to endocytosis; this interaction is reduced in the presence of LRPAP1/RAP. Interacts with IGFBP3. Interacts with ADGRG6. In terms of processing, cleaved into a 85 kDa membrane-spanning subunit (LRP-85) and a 515 kDa large extracellular domain (LRP-515) that remains non-covalently associated. Gamma-secretase-dependent cleavage of LRP-85 releases the intracellular domain from the membrane. Post-translationally, phosphorylated on serine and threonine residues. Phosphorylated on tyrosine residues upon stimulation with PDGF. Tyrosine phosphorylation promotes interaction with SHC1.

The protein localises to the cell membrane. It localises to the membrane. It is found in the coated pit. The protein resides in the golgi outpost. Its subcellular location is the cytoplasm. The protein localises to the cytoskeleton. It localises to the microtubule organizing center. It is found in the nucleus. Functionally, endocytic receptor involved in endocytosis and in phagocytosis of apoptotic cells. Required for early embryonic development. Involved in cellular lipid homeostasis. Involved in the plasma clearance of chylomicron remnants and activated LRPAP1 (alpha 2-macroglobulin), as well as the local metabolism of complexes between plasminogen activators and their endogenous inhibitors. Acts as an LRPAP1 alpha-2-macroglobulin receptor. Acts as a TAU/MAPT receptor and controls the endocytosis of TAU/MAPT as well as its subsequent spread. May modulate cellular events, such as APP metabolism, kinase-dependent intracellular signaling, neuronal calcium signaling as well as neurotransmission. Also acts as a receptor for IGFBP3 to mediate cell growth inhibition. This is Prolow-density lipoprotein receptor-related protein 1 from Rattus norvegicus (Rat).